A 347-amino-acid polypeptide reads, in one-letter code: BSD domain-containing protein C22A12.14c (347 aa).

2 positions are modified to phosphothreonine: T123 and T125. The BSD domain occupies 167 to 219 (WEKEISIDGKTEEISLLLEEYPDLRKQMESLVPSEVSYDDFWKRFFWHKEVVQ). The tract at residues 229–347 (DEEEIFSWGD…DDDEDDDDWE (119 aa)) is disordered. S235, S241, and S246 each carry phosphoserine. Acidic residues predominate over residues 240–251 (RSDEEESDNEQV). Basic and acidic residues predominate over residues 297 to 312 (HDGEVDGEVKEEEENK). The span at 313 to 325 (VSSSSNIEASQSS) shows a compositional bias: low complexity. Residues 327 to 337 (EVKDEANRKVD) are compositionally biased toward basic and acidic residues. The segment covering 338 to 347 (DDDEDDDDWE) has biased composition (acidic residues).

Its subcellular location is the cytoplasm. The sequence is that of BSD domain-containing protein C22A12.14c from Schizosaccharomyces pombe (strain 972 / ATCC 24843) (Fission yeast).